A 356-amino-acid chain; its full sequence is tRNA N6-adenosine threonylcarbamoyltransferase (356 aa).

Residues histidine 115 and histidine 119 each coordinate Fe cation. Substrate contacts are provided by residues 138–142 (LVSGG), aspartate 171, glycine 184, and asparagine 277. Aspartate 305 provides a ligand contact to Fe cation.

It belongs to the KAE1 / TsaD family. The cofactor is Fe(2+).

Its subcellular location is the cytoplasm. It carries out the reaction L-threonylcarbamoyladenylate + adenosine(37) in tRNA = N(6)-L-threonylcarbamoyladenosine(37) in tRNA + AMP + H(+). Its function is as follows. Required for the formation of a threonylcarbamoyl group on adenosine at position 37 (t(6)A37) in tRNAs that read codons beginning with adenine. Is involved in the transfer of the threonylcarbamoyl moiety of threonylcarbamoyl-AMP (TC-AMP) to the N6 group of A37, together with TsaE and TsaB. TsaD likely plays a direct catalytic role in this reaction. This Polaromonas naphthalenivorans (strain CJ2) protein is tRNA N6-adenosine threonylcarbamoyltransferase.